A 388-amino-acid polypeptide reads, in one-letter code: Alanine racemase 3 (388 aa).

Lys41 (proton acceptor; specific for D-alanine) is an active-site residue. Lys41 bears the N6-(pyridoxal phosphate)lysine mark. Residue Arg135 participates in substrate binding. The active-site Proton acceptor; specific for L-alanine is the Tyr256. Met304 is a binding site for substrate.

Belongs to the alanine racemase family. Pyridoxal 5'-phosphate is required as a cofactor.

It catalyses the reaction L-alanine = D-alanine. The protein operates within amino-acid biosynthesis; D-alanine biosynthesis; D-alanine from L-alanine: step 1/1. Functionally, catalyzes the interconversion of L-alanine and D-alanine. May also act on other amino acids. The chain is Alanine racemase 3 (alr3) from Mesorhizobium japonicum (strain LMG 29417 / CECT 9101 / MAFF 303099) (Mesorhizobium loti (strain MAFF 303099)).